Here is a 219-residue protein sequence, read N- to C-terminus: Large ribosomal subunit protein uL3 (219 aa).

A disordered region spans residues 133–153 (GRASHGNSRSHNVPGSIGMAQ). Residue Gln-153 is modified to N5-methylglutamine.

It belongs to the universal ribosomal protein uL3 family. In terms of assembly, part of the 50S ribosomal subunit. Forms a cluster with proteins L14 and L19. In terms of processing, methylated by PrmB.

Functionally, one of the primary rRNA binding proteins, it binds directly near the 3'-end of the 23S rRNA, where it nucleates assembly of the 50S subunit. This is Large ribosomal subunit protein uL3 from Burkholderia mallei (strain NCTC 10247).